Reading from the N-terminus, the 419-residue chain is Creatine kinase S-type, mitochondrial (419 aa).

The N-terminal 39 residues, 1–39, are a transit peptide targeting the mitochondrion; the sequence is MASAFSKLLTGRNASLLFTTLGTSALTTGYLLNRQKVSA. Residues 40–64 are cardiolipin-binding; the sequence is DAREQHKLFPPSADYPDLRKHNNCM. In terms of domain architecture, Phosphagen kinase N-terminal spans 46 to 132; the sequence is KLFPPSADYP…FDPVIKLRHN (87 aa). The region spanning 159–401 is the Phosphagen kinase C-terminal domain; it reads YVLSSRVRTG…NYLVDCEKKL (243 aa). Residues 162–166 and H225 each bind ATP; that span reads SSRVR. Phosphotyrosine is present on Y255. Residues R270, R326, 354-359, and D369 each bind ATP; that span reads RGTGGV. At T356 the chain carries Phosphothreonine.

Belongs to the ATP:guanido phosphotransferase family. In terms of assembly, exists as an octamer composed of four CKMT2 homodimers. As to expression, sarcomere-specific. Found only in heart and skeletal muscles.

It is found in the mitochondrion inner membrane. It catalyses the reaction creatine + ATP = N-phosphocreatine + ADP + H(+). Its function is as follows. Reversibly catalyzes the transfer of phosphate between ATP and various phosphogens (e.g. creatine phosphate). Creatine kinase isoenzymes play a central role in energy transduction in tissues with large, fluctuating energy demands, such as skeletal muscle, heart, brain and spermatozoa. The sequence is that of Creatine kinase S-type, mitochondrial (Ckmt2) from Rattus norvegicus (Rat).